We begin with the raw amino-acid sequence, 399 residues long: MMPERIILAYSGGLDTSVAINWIGKETSHEVVAVVIDLGQGGEDMEVVRQRALDCGAVEAIVVDARDEFAEGYCLPTVLNNALYMDRYPLVSAISRPLIVKHLVAAARAHGGSIVAHGCTGKGNDQVRFEVGFASLAPDLEILAPVRDYAWTREKAIAFAEENAIPINVTKRSPFSIDQNVWGRAVETGFLEHLWHAPTKEVYSYTDDPTINWNTPDEVIVGFEHGVPVSIDGSPVSMLGAIEALNRRAGAQGVGRLDVVEDRLVGIKSREIYEAPGAMVLITAHAELEHVTLERELGRFKRQTDRRWAELVYDGLWYSPLKTALESFVAATQQHVTGEVRMVLHGGHIAVNGRRSAESLYDFNLATYDEGDTFDQSAARGFVYVYGLPSKLAARRDLR.

Residue Ala-9 to Ser-17 coordinates ATP. Residue Tyr-88 participates in L-citrulline binding. An ATP-binding site is contributed by Gly-118. 3 residues coordinate L-aspartate: Thr-120, Asn-124, and Asp-125. Asn-124 is an L-citrulline binding site. The L-citrulline site is built by Arg-128, Ser-176, Glu-261, and Tyr-273.

This sequence belongs to the argininosuccinate synthase family. Type 1 subfamily. As to quaternary structure, homotetramer.

The protein resides in the cytoplasm. The enzyme catalyses L-citrulline + L-aspartate + ATP = 2-(N(omega)-L-arginino)succinate + AMP + diphosphate + H(+). The protein operates within amino-acid biosynthesis; L-arginine biosynthesis; L-arginine from L-ornithine and carbamoyl phosphate: step 2/3. The protein is Argininosuccinate synthase of Mycobacterium leprae (strain TN).